The sequence spans 726 residues: Quinolinate synthase, chloroplastic (726 aa).

Residues 1 to 67 (MDAANLVMKS…KKPSNNSTFT (67 aa)) constitute a chloroplast transit peptide. The active-site Cysteine persulfide intermediate is cysteine 133. Iminosuccinate is bound by residues histidine 283 and serine 309. Cysteine 363 is a binding site for [4Fe-4S] cluster. Residues 392-394 (YIN) and serine 414 contribute to the iminosuccinate site. Cysteine 487 provides a ligand contact to [4Fe-4S] cluster. Iminosuccinate is bound by residues 513–515 (HFE) and threonine 538. Cysteine 643 serves as a coordination point for [4Fe-4S] cluster.

The protein belongs to the quinolinate synthase family. Type 1 subfamily. In terms of assembly, homodimer. It depends on [4Fe-4S] cluster as a cofactor.

The protein localises to the plastid. It localises to the chloroplast. The catalysed reaction is iminosuccinate + dihydroxyacetone phosphate = quinolinate + phosphate + 2 H2O + H(+). It participates in alkaloid biosynthesis; nicotine biosynthesis. The protein operates within cofactor biosynthesis; NAD(+) biosynthesis; quinolinate from iminoaspartate: step 1/1. Involved in the biosynthesis of pyridine alkaloid natural products, leading mainly to the production of anabasine, anatabine, nicotine and nornicotine, effective deterrents against herbivores with antiparasitic and pesticide properties (neurotoxins); nornicotine serves as the precursor in the synthesis of the carcinogen compound N'-nitrosonornicotine (NNN). Catalyzes the condensation of iminoaspartate with dihydroxyacetone phosphate to form quinolinate. The protein is Quinolinate synthase, chloroplastic of Nicotiana tabacum (Common tobacco).